We begin with the raw amino-acid sequence, 198 residues long: Leucine-rich melanocyte differentiation-associated protein (198 aa).

4 LRR repeats span residues glutamate 2 to serine 22, serine 26 to proline 47, arginine 48 to leucine 69, and alanine 75 to glutamate 95. One can recognise an LRRCT domain in the interval lysine 96 to arginine 134.

In terms of tissue distribution, in the embryo, expressed in melanoblasts. In the fetus, expressed in melanocytes. Not detected in retinal pigment epithelial cells.

Its function is as follows. Required for melanocyte differentiation. This Homo sapiens (Human) protein is Leucine-rich melanocyte differentiation-associated protein.